Reading from the N-terminus, the 507-residue chain is 2,3-bisphosphoglycerate-independent phosphoglycerate mutase (507 aa).

Residues Asp11 and Ser61 each coordinate Mn(2+). The Phosphoserine intermediate role is filled by Ser61. Residues His122, 150-151 (RD), Arg182, Arg188, 257-260 (RPDR), and Lys332 each bind substrate. Asp397, His401, Asp438, His439, and His456 together coordinate Mn(2+).

This sequence belongs to the BPG-independent phosphoglycerate mutase family. As to quaternary structure, monomer. Requires Mn(2+) as cofactor.

It catalyses the reaction (2R)-2-phosphoglycerate = (2R)-3-phosphoglycerate. The protein operates within carbohydrate degradation; glycolysis; pyruvate from D-glyceraldehyde 3-phosphate: step 3/5. Catalyzes the interconversion of 2-phosphoglycerate and 3-phosphoglycerate. This chain is 2,3-bisphosphoglycerate-independent phosphoglycerate mutase, found in Mycoplasma genitalium (strain ATCC 33530 / DSM 19775 / NCTC 10195 / G37) (Mycoplasmoides genitalium).